The primary structure comprises 164 residues: Putative pre-16S rRNA nuclease (164 aa).

The protein belongs to the YqgF nuclease family.

Its subcellular location is the cytoplasm. Could be a nuclease involved in processing of the 5'-end of pre-16S rRNA. The protein is Putative pre-16S rRNA nuclease of Rhizobium etli (strain CIAT 652).